The following is a 242-amino-acid chain: Small ribosomal subunit protein uS2 (242 aa).

It belongs to the universal ribosomal protein uS2 family.

The polypeptide is Small ribosomal subunit protein uS2 (Aeromonas salmonicida (strain A449)).